Reading from the N-terminus, the 348-residue chain is Heat-inducible transcription repressor HrcA (348 aa).

It belongs to the HrcA family.

Functionally, negative regulator of class I heat shock genes (grpE-dnaK-dnaJ and groELS operons). Prevents heat-shock induction of these operons. The sequence is that of Heat-inducible transcription repressor HrcA from Thermodesulfovibrio yellowstonii (strain ATCC 51303 / DSM 11347 / YP87).